Here is a 353-residue protein sequence, read N- to C-terminus: Ribosomal RNA small subunit methyltransferase H (353 aa).

Residues 39–41 (AGH), D58, F90, D108, and Q115 each bind S-adenosyl-L-methionine. The segment at 334–353 (SEDGVRGAHGHRRRTQARRG) is disordered. Basic residues predominate over residues 341–353 (AHGHRRRTQARRG).

The protein belongs to the methyltransferase superfamily. RsmH family.

It localises to the cytoplasm. The catalysed reaction is cytidine(1402) in 16S rRNA + S-adenosyl-L-methionine = N(4)-methylcytidine(1402) in 16S rRNA + S-adenosyl-L-homocysteine + H(+). In terms of biological role, specifically methylates the N4 position of cytidine in position 1402 (C1402) of 16S rRNA. The sequence is that of Ribosomal RNA small subunit methyltransferase H from Bifidobacterium animalis subsp. lactis (strain AD011).